The chain runs to 168 residues: Shikimate kinase (168 aa).

10–15 serves as a coordination point for ATP; it reads GVGKTT. Thr14 is a binding site for Mg(2+). Residues Asp32, Arg56, and Gly77 each contribute to the substrate site. Residue Arg115 coordinates ATP. Substrate is bound at residue Arg133.

It belongs to the shikimate kinase family. In terms of assembly, monomer. The cofactor is Mg(2+).

It localises to the cytoplasm. It carries out the reaction shikimate + ATP = 3-phosphoshikimate + ADP + H(+). It functions in the pathway metabolic intermediate biosynthesis; chorismate biosynthesis; chorismate from D-erythrose 4-phosphate and phosphoenolpyruvate: step 5/7. In terms of biological role, catalyzes the specific phosphorylation of the 3-hydroxyl group of shikimic acid using ATP as a cosubstrate. This Macrococcus caseolyticus (strain JCSC5402) (Macrococcoides caseolyticum) protein is Shikimate kinase.